Consider the following 501-residue polypeptide: Glycerol kinase (501 aa).

An ADP-binding site is contributed by threonine 12. 3 residues coordinate ATP: threonine 12, threonine 13, and serine 14. Residue threonine 12 participates in sn-glycerol 3-phosphate binding. Residue arginine 16 participates in ADP binding. Arginine 82, glutamate 83, tyrosine 135, and aspartate 244 together coordinate sn-glycerol 3-phosphate. Glycerol contacts are provided by arginine 82, glutamate 83, tyrosine 135, aspartate 244, and glutamine 245. ADP is bound by residues threonine 266, glycine 309, glycine 409, and asparagine 413. The ATP site is built by threonine 266, glycine 309, and glycine 409.

This sequence belongs to the FGGY kinase family.

The catalysed reaction is glycerol + ATP = sn-glycerol 3-phosphate + ADP + H(+). It functions in the pathway polyol metabolism; glycerol degradation via glycerol kinase pathway; sn-glycerol 3-phosphate from glycerol: step 1/1. With respect to regulation, inhibited by fructose 1,6-bisphosphate (FBP). Key enzyme in the regulation of glycerol uptake and metabolism. Catalyzes the phosphorylation of glycerol to yield sn-glycerol 3-phosphate. In Coxiella burnetii (strain RSA 331 / Henzerling II), this protein is Glycerol kinase.